Consider the following 129-residue polypeptide: Small ribosomal subunit protein uS11 (129 aa).

The disordered stretch occupies residues 109–129 (VDDTPVPHNGCRPKKKFRKAS). Basic residues predominate over residues 119–129 (CRPKKKFRKAS).

This sequence belongs to the universal ribosomal protein uS11 family. In terms of assembly, part of the 30S ribosomal subunit. Interacts with proteins S7 and S18. Binds to the C-terminus of IF-3; however exactly how IF-3 interacts with the 30S subunit is unclear.

Located on the upper part of the platform of the 30S subunit, where it bridges several disparate RNA helices of the 16S rRNA. Forms part of the Shine-Dalgarno cleft in the 70S ribosome. The chain is Small ribosomal subunit protein uS11 (rpsK) from Thermus thermophilus (strain ATCC BAA-163 / DSM 7039 / HB27).